Consider the following 125-residue polypeptide: Apolipoprotein C-IV (125 aa).

Residues 1-27 (MSLLRHSLQALPALCLCVLVLACIGAC) form the signal peptide.

It belongs to the apolipoprotein C4 family.

The protein resides in the secreted. Functionally, may participate in lipoprotein metabolism. The protein is Apolipoprotein C-IV (APOC4) of Ateles geoffroyi (Black-handed spider monkey).